The primary structure comprises 104 residues: Type IV secretion system protein PtlB homolog (104 aa).

The chain crosses the membrane as a helical span at residues 30–50; the sequence is IALLGIWFSIAFLALFPVALL.

It belongs to the virB3 family.

Its subcellular location is the cell membrane. This is Type IV secretion system protein PtlB homolog (ptlB) from Bordetella bronchiseptica (strain ATCC BAA-588 / NCTC 13252 / RB50) (Alcaligenes bronchisepticus).